Here is a 510-residue protein sequence, read N- to C-terminus: Cobyric acid synthase (510 aa).

The GATase cobBQ-type domain maps to 249–458; that stretch reads CFKVRVLVYP…LHGLFDSPDA (210 aa). Cys-336 (nucleophile) is an active-site residue. The active site involves His-450.

The protein belongs to the CobB/CobQ family. CobQ subfamily.

Its pathway is cofactor biosynthesis; adenosylcobalamin biosynthesis. Its function is as follows. Catalyzes amidations at positions B, D, E, and G on adenosylcobyrinic A,C-diamide. NH(2) groups are provided by glutamine, and one molecule of ATP is hydrogenolyzed for each amidation. The sequence is that of Cobyric acid synthase from Shewanella oneidensis (strain ATCC 700550 / JCM 31522 / CIP 106686 / LMG 19005 / NCIMB 14063 / MR-1).